We begin with the raw amino-acid sequence, 239 residues long: Pyridoxal 5'-phosphate synthase subunit PdxS (239 aa).

Asp21 contributes to the D-ribose 5-phosphate binding site. Lys78 acts as the Schiff-base intermediate with D-ribose 5-phosphate in catalysis. Gly150 serves as a coordination point for D-ribose 5-phosphate. Arg162 provides a ligand contact to D-glyceraldehyde 3-phosphate. Residues Gly211 and Gly232–Ser233 contribute to the D-ribose 5-phosphate site.

This sequence belongs to the PdxS/SNZ family. In the presence of PdxT, forms a dodecamer of heterodimers.

The catalysed reaction is aldehydo-D-ribose 5-phosphate + D-glyceraldehyde 3-phosphate + L-glutamine = pyridoxal 5'-phosphate + L-glutamate + phosphate + 3 H2O + H(+). It functions in the pathway cofactor biosynthesis; pyridoxal 5'-phosphate biosynthesis. In terms of biological role, catalyzes the formation of pyridoxal 5'-phosphate from ribose 5-phosphate (RBP), glyceraldehyde 3-phosphate (G3P) and ammonia. The ammonia is provided by the PdxT subunit. Can also use ribulose 5-phosphate and dihydroxyacetone phosphate as substrates, resulting from enzyme-catalyzed isomerization of RBP and G3P, respectively. The protein is Pyridoxal 5'-phosphate synthase subunit PdxS of Francisella tularensis.